Consider the following 155-residue polypeptide: Small ribosomal subunit protein uS7 (155 aa).

Belongs to the universal ribosomal protein uS7 family. In terms of assembly, part of the 30S ribosomal subunit. Contacts proteins S9 and S11.

Functionally, one of the primary rRNA binding proteins, it binds directly to 16S rRNA where it nucleates assembly of the head domain of the 30S subunit. Is located at the subunit interface close to the decoding center, probably blocks exit of the E-site tRNA. In Chlorobium phaeovibrioides (strain DSM 265 / 1930) (Prosthecochloris vibrioformis (strain DSM 265)), this protein is Small ribosomal subunit protein uS7.